Here is a 515-residue protein sequence, read N- to C-terminus: Cytochrome P450 1A1 (515 aa).

Phenylalanine 225 serves as a coordination point for substrate. Position 459 (cysteine 459) interacts with heme.

Belongs to the cytochrome P450 family. It depends on heme as a cofactor.

The protein localises to the endoplasmic reticulum membrane. It localises to the microsome membrane. It catalyses the reaction an organic molecule + reduced [NADPH--hemoprotein reductase] + O2 = an alcohol + oxidized [NADPH--hemoprotein reductase] + H2O + H(+). Functionally, cytochromes P450 are a group of heme-thiolate monooxygenases. They oxidize a variety of structurally unrelated compounds, including steroids, fatty acids, and xenobiotics. This chain is Cytochrome P450 1A1 (cyp1a1), found in Microgadus tomcod (Atlantic tomcod).